The sequence spans 397 residues: Arginine biosynthesis bifunctional protein ArgJ (397 aa).

Threonine 147, lysine 173, threonine 184, glutamate 270, asparagine 392, and threonine 397 together coordinate substrate. Threonine 184 (nucleophile) is an active-site residue.

Belongs to the ArgJ family. Heterotetramer of two alpha and two beta chains.

It localises to the cytoplasm. The catalysed reaction is N(2)-acetyl-L-ornithine + L-glutamate = N-acetyl-L-glutamate + L-ornithine. It catalyses the reaction L-glutamate + acetyl-CoA = N-acetyl-L-glutamate + CoA + H(+). It functions in the pathway amino-acid biosynthesis; L-arginine biosynthesis; L-ornithine and N-acetyl-L-glutamate from L-glutamate and N(2)-acetyl-L-ornithine (cyclic): step 1/1. Its pathway is amino-acid biosynthesis; L-arginine biosynthesis; N(2)-acetyl-L-ornithine from L-glutamate: step 1/4. Catalyzes two activities which are involved in the cyclic version of arginine biosynthesis: the synthesis of N-acetylglutamate from glutamate and acetyl-CoA as the acetyl donor, and of ornithine by transacetylation between N(2)-acetylornithine and glutamate. This is Arginine biosynthesis bifunctional protein ArgJ from Streptococcus mutans serotype c (strain ATCC 700610 / UA159).